The following is a 507-amino-acid chain: Rho GTPase-activating protein 19 (507 aa).

The Rho-GAP domain occupies 112–305 (APLTEEGIAQ…FMIKHSQKLF (194 aa)). Disordered stretches follow at residues 344 to 371 (FLKH…QQHT), 400 to 419 (KNTP…KKHV), and 483 to 507 (DLQI…ETSI). Over residues 355-369 (SSPSSSTSLQEQTQQ) the composition is skewed to low complexity. Residues 400–413 (KNTPRTPVSDTQVP) show a composition bias toward polar residues. Over residues 483–492 (DLQIRKEASS) the composition is skewed to basic and acidic residues.

GTPase activator for the Rho-type GTPases by converting them to an inactive GDP-bound state. The sequence is that of Rho GTPase-activating protein 19 (arhgap19) from Xenopus laevis (African clawed frog).